A 563-amino-acid chain; its full sequence is NAD-dependent malic enzyme (563 aa).

Tyr101 acts as the Proton donor in catalysis. Position 154 (Arg154) interacts with NAD(+). Lys172 (proton acceptor) is an active-site residue. A divalent metal cation contacts are provided by Glu243, Asp244, and Asp267. The NAD(+) site is built by Asp267 and Asn416.

The protein belongs to the malic enzymes family. In terms of assembly, homotetramer. It depends on Mg(2+) as a cofactor. Mn(2+) serves as cofactor.

It carries out the reaction (S)-malate + NAD(+) = pyruvate + CO2 + NADH. It catalyses the reaction oxaloacetate + H(+) = pyruvate + CO2. This Pseudomonas syringae pv. syringae (strain B728a) protein is NAD-dependent malic enzyme.